Here is a 324-residue protein sequence, read N- to C-terminus: PDZ domain-containing protein MAGIX (324 aa).

Positions 1–26 are disordered; that stretch reads MDSRAGNTADPRGGRRGGGLQGSRSP. The region spanning 128 to 212 is the PDZ domain; it reads SVELTRGPAG…HLCLVLQRPQ (85 aa). The span at 216 to 241 shows a compositional bias: basic and acidic residues; the sequence is GSRIKEVGGHRKTDRSLDPRGSRVES. The segment at 216 to 263 is disordered; the sequence is GSRIKEVGGHRKTDRSLDPRGSRVESRSTISPVHHRPKTRTSPRPSPE. Position 261 is a phosphoserine (serine 261).

The chain is PDZ domain-containing protein MAGIX (Magix) from Mus musculus (Mouse).